Consider the following 404-residue polypeptide: Photosynthetic reaction center cytochrome c subunit (404 aa).

Residues 1 to 22 (MSPAQQLTLPAVIVVASVMLLG) form the signal peptide. C23 carries the N-palmitoyl cysteine lipid modification. Residue C23 is the site of S-diacylglycerol cysteine attachment. Heme is bound by residues M94, C107, C110, H111, M130, H144, C152, C155, H156, M236, C247, C250, H251, C307, C310, and H311. A disordered region spans residues 346 to 404 (ASEAAPAAATEAAPEAPAQEVPAAEAVPAAAEPGAAEAAGSVEPAPVEEVAPAPAAQRL).

As to quaternary structure, component of the photosynthetic reaction center composed of protein subunits L (PufL), M (PufM), H (PuhA) and cytochrome C (PufC). The reaction center interacts with light-harvesting antenna complex LH1. Post-translationally, binds 4 heme groups per subunit.

Its subcellular location is the cellular chromatophore membrane. Functionally, the reaction center of purple bacteria contains a tightly bound cytochrome molecule which re-reduces the photo oxidized primary electron donor. The chain is Photosynthetic reaction center cytochrome c subunit from Thermochromatium tepidum (Chromatium tepidum).